We begin with the raw amino-acid sequence, 85 residues long: Large ribosomal subunit protein bL27 (85 aa).

Residues 1 to 21 (MAHKKAGGSTRNGRDSNAQRL) are disordered. A compositionally biased stretch (polar residues) spans 9 to 19 (STRNGRDSNAQ).

The protein belongs to the bacterial ribosomal protein bL27 family.

In Pectobacterium atrosepticum (strain SCRI 1043 / ATCC BAA-672) (Erwinia carotovora subsp. atroseptica), this protein is Large ribosomal subunit protein bL27.